Here is a 484-residue protein sequence, read N- to C-terminus: Transcription factor MYB88 (484 aa).

The disordered stretch occupies residues 1–20 (MEETTKQNNMKKKKKILLHS). The short motif at 13-20 (KKKILLHS) is the Nuclear localization signal element. HTH myb-type domains lie at 25–76 (KKER…YTYL) and 77–131 (NSDF…KKRA). DNA-binding regions (H-T-H motif) lie at residues 53 to 76 (WAII…YTYL) and 104 to 127 (WTEI…TTLC). Disordered regions lie at residues 215–241 (NATS…DKSN), 321–383 (RSSN…GGEL), and 458–484 (GVES…LDSL). Over residues 232 to 241 (KESDGEDKSN) the composition is skewed to basic and acidic residues. Residues 339–348 (SPASSEYSSG) are compositionally biased toward low complexity. The span at 354–380 (TIMTHPSGDKTQQLMSDTQTTSHQQNG) shows a compositional bias: polar residues. A compositionally biased stretch (pro residues) spans 463-476 (SPYPSANPSQPPPC).

As to quaternary structure, interacts with RBR1. In terms of tissue distribution, expressed at low levels in all organs including roots, leaves, hypocotyls stems, flowers, siliques and buds.

It is found in the nucleus. Transcription factor that binds to DNA in promoters cis-regulatory element 5'-GGCGCGC-3' of cell cycle genes, including cyclins, cyclin-dependent kinases (CDKs), and components of the pre-replication complex. Binds to DNA in promoters cis-regulatory element 5'-AGCCG-3' of auxin regulated genes (e.g. PIN3 and PIN7). Together with FAMA and MYB124, ensures that stomata contain just two guard cells (GCs) by enforcing a single symmetric precursor cell division before stomatal maturity. Represses the expression of the mitosis-inducing factors CDKB1-1 and CDKA-1, specifically required for the last guard mother cells (GMC) symmetric divisions in the stomatal pathway. Represses CYCA2-3 in newly formed guard cells. Together with MYB88, regulates stomata spacing by restricting divisions late in the stomatal cell lineage thus limiting the number of GMC divisions. In collaboration with CDKB1-1 and CDKB1-2, restrict the G1/S transition and chloroplast and nuclear number during stomatal formation, and normally maintain fate and developmental progression throughout the stomatal cell lineage. Involved in sensing and/or transducing abiotic stress (e.g. drought and salt), probably via the positive regulation of NAC019. Regulates female reproduction being required for entry into megasporogenesis, probably via the regulation of cell cycle genes. Plays a minor role in lateral roots (LRs) initiation. Involved complementarily in establishing the gravitropic set-point angles of lateral roots by regulating the transcription of PIN3 and PIN7 in gravity-sensing cells of primary and lateral roots. This chain is Transcription factor MYB88, found in Arabidopsis thaliana (Mouse-ear cress).